The chain runs to 350 residues: Methylthioribose-1-phosphate isomerase (350 aa).

Substrate is bound by residues 48-50 (RGA), R93, and Q198. The Proton donor role is filled by D239. 249 to 250 (NK) provides a ligand contact to substrate.

Belongs to the eIF-2B alpha/beta/delta subunits family. MtnA subfamily.

It carries out the reaction 5-(methylsulfanyl)-alpha-D-ribose 1-phosphate = 5-(methylsulfanyl)-D-ribulose 1-phosphate. Its pathway is amino-acid biosynthesis; L-methionine biosynthesis via salvage pathway; L-methionine from S-methyl-5-thio-alpha-D-ribose 1-phosphate: step 1/6. Functionally, catalyzes the interconversion of methylthioribose-1-phosphate (MTR-1-P) into methylthioribulose-1-phosphate (MTRu-1-P). The protein is Methylthioribose-1-phosphate isomerase of Fervidobacterium nodosum (strain ATCC 35602 / DSM 5306 / Rt17-B1).